The chain runs to 164 residues: SsrA-binding protein (164 aa).

The protein belongs to the SmpB family.

It is found in the cytoplasm. In terms of biological role, required for rescue of stalled ribosomes mediated by trans-translation. Binds to transfer-messenger RNA (tmRNA), required for stable association of tmRNA with ribosomes. tmRNA and SmpB together mimic tRNA shape, replacing the anticodon stem-loop with SmpB. tmRNA is encoded by the ssrA gene; the 2 termini fold to resemble tRNA(Ala) and it encodes a 'tag peptide', a short internal open reading frame. During trans-translation Ala-aminoacylated tmRNA acts like a tRNA, entering the A-site of stalled ribosomes, displacing the stalled mRNA. The ribosome then switches to translate the ORF on the tmRNA; the nascent peptide is terminated with the 'tag peptide' encoded by the tmRNA and targeted for degradation. The ribosome is freed to recommence translation, which seems to be the essential function of trans-translation. The protein is SsrA-binding protein of Gluconobacter oxydans (strain 621H) (Gluconobacter suboxydans).